The following is a 350-amino-acid chain: 3-isopropylmalate dehydrogenase (350 aa).

71–84 serves as a coordination point for NAD(+); sequence GPKWADAPRHLRPE. Positions 91, 101, 129, and 220 each coordinate substrate. Residues D220, D244, and D248 each contribute to the Mg(2+) site. 279–291 contributes to the NAD(+) binding site; that stretch reads GSAPDIAGKGLAN.

This sequence belongs to the isocitrate and isopropylmalate dehydrogenases family. LeuB type 1 subfamily. Homodimer. The cofactor is Mg(2+). It depends on Mn(2+) as a cofactor.

Its subcellular location is the cytoplasm. It catalyses the reaction (2R,3S)-3-isopropylmalate + NAD(+) = 4-methyl-2-oxopentanoate + CO2 + NADH. It participates in amino-acid biosynthesis; L-leucine biosynthesis; L-leucine from 3-methyl-2-oxobutanoate: step 3/4. Its function is as follows. Catalyzes the oxidation of 3-carboxy-2-hydroxy-4-methylpentanoate (3-isopropylmalate) to 3-carboxy-4-methyl-2-oxopentanoate. The product decarboxylates to 4-methyl-2 oxopentanoate. The chain is 3-isopropylmalate dehydrogenase from Caulobacter vibrioides (strain ATCC 19089 / CIP 103742 / CB 15) (Caulobacter crescentus).